Consider the following 520-residue polypeptide: MTWNKAPAADAEAGGGGDTGHARLRELGYKQELKRDLSVLSNFAFSFSIISVLTGITTLYNTGLSFGGPATMTFGWFVAGAFTMTVGLSMAEICSSFPTSGGLYYWSARLSGKRWAPFASWITGWFNIVGQWAVTTSVDFSLAQLIQVIILLSTGGNNGGGYMASKYVVIAFHAAILLSHAAINSLPITWLSFFGQFAAAWNMLGVFVLMIAVPTVATERASAKFVFTHFNTENNAGIHSNFYIFVLGLLMSQYTLTGYDASAHMTEETKNADRNGPIGIISAIGISIIVGWGYILGITFAVKDIPYLLNPENDAGGYAIAEVFYLAFKSRYGSGIGGIICLGIVAVAIYFCGMSSVTSNSRMAYAFSRDGAMPLSSVWHKVNKHEVPINAVWLSALISLCMALPSLGSLVAFQAMVSIATIGLYVAYALPILFRVTLARKHFVPGPFNLGRCGVAVGWAAVLWVATITVLFSLPVSYPVTKDTLNYTPVAVGGLFLLVLSSWLLSARHWFKGPITNLDG.

The next 12 helical transmembrane spans lie at 39–59 (VLSNFAFSFSIISVLTGITTL), 74–94 (FGWFVAGAFTMTVGLSMAEIC), 118–138 (FASWITGWFNIVGQWAVTTSV), 168–188 (VVIAFHAAILLSHAAINSLPI), 193–213 (FFGQFAAAWNMLGVFVLMIAV), 236–256 (AGIHSNFYIFVLGLLMSQYTL), 278–298 (IGIISAIGISIIVGWGYILGI), 334–354 (SGIGGIICLGIVAVAIYFCGM), 387–407 (VPINAVWLSALISLCMALPSL), 410–430 (LVAFQAMVSIATIGLYVAYAL), 454–474 (GVAVGWAAVLWVATITVLFSL), and 487–507 (YTPVAVGGLFLLVLSSWLLSA).

It belongs to the amino acid-polyamine-organocation (APC) superfamily. Amino acid/choline transporter (ACT) (TC 2.A.3.4) family.

It localises to the membrane. May be involved in the transport of amino acids. This Oryza sativa subsp. japonica (Rice) protein is Amino-acid permease BAT1 homolog (BAT1).